A 353-amino-acid polypeptide reads, in one-letter code: Protein O-mannose kinase (353 aa).

The Cytoplasmic segment spans residues 1–19 (MEKKAHFVKRDFPPREAPS). Residues 20–40 (LLLLLLVVAVLLLNALLYLYL) form a helical; Signal-anchor for type II membrane protein membrane-spanning segment. Topologically, residues 41 to 353 (GNLHGSSGRA…AAMPSTREML (313 aa)) are lumenal. Residues 83-353 (VRKLKCVGEG…AAMPSTREML (271 aa)) enclose the Protein kinase domain. Residues N163 and N237 are each glycosylated (N-linked (GlcNAc...) asparagine).

Belongs to the protein kinase superfamily. Ser/Thr protein kinase family. STKL subfamily.

It is found in the endoplasmic reticulum membrane. It carries out the reaction 3-O-[beta-D-GalNAc-(1-&gt;3)-beta-D-GlcNAc-(1-&gt;4)-alpha-D-Man]-L-Thr-[protein] + ATP = 3-O-[beta-D-GalNAc-(1-&gt;3)-beta-D-GlcNAc-(1-&gt;4)-(O-6-P-alpha-D-Man)]-Thr-[protein] + ADP + H(+). Functionally, protein O-mannose kinase that specifically mediates phosphorylation at the 6-position of an O-mannose of the trisaccharide (N-acetylgalactosamine (GalNAc)-beta-1,3-N-acetylglucosamine (GlcNAc)-beta-1,4-mannose) to generate phosphorylated O-mannosyl trisaccharide (N-acetylgalactosamine-beta-1,3-N-acetylglucosamine-beta-1,4-(phosphate-6-)mannose). Phosphorylated O-mannosyl trisaccharide is a carbohydrate structure present in alpha-dystroglycan (DAG1), which is required for binding laminin G-like domain-containing extracellular proteins with high affinity. Only shows kinase activity when the GalNAc-beta-3-GlcNAc-beta-terminus is linked to the 4-position of O-mannose, suggesting that this disaccharide serves as the substrate recognition motif. The polypeptide is Protein O-mannose kinase (POMK) (Gallus gallus (Chicken)).